A 278-amino-acid polypeptide reads, in one-letter code: MAIKIYKPTTNGRRHMTSSDFAEITKTKPEKTLLESQSHTAGRNSYGHITVRHRGGGHKQKYRIIDFKRNKDNTKAVVKAIEYDPNRTANIALLHYTDGIKAYILAPKGLKVGDIVESGDSVDIKPGNALALKNIPSGTSIHNIELKPGKGGQLVRSAGASAQVLGVDGDYTLVRLQSGEVRKILSSCRATIGVVGNEQHSLIKLGKAGRKRWLGKRPQSRGSVMNPNDHPHGGGEGKAPVGRPQPMTPWGKKARGIKTRDTKKASEKLIIRRRKGSK.

The interval 211–278 (KRWLGKRPQS…LIIRRRKGSK (68 aa)) is disordered. A compositionally biased stretch (basic and acidic residues) spans 258–270 (KTRDTKKASEKLI).

It belongs to the universal ribosomal protein uL2 family. As to quaternary structure, part of the 50S ribosomal subunit. Forms a bridge to the 30S subunit in the 70S ribosome.

One of the primary rRNA binding proteins. Required for association of the 30S and 50S subunits to form the 70S ribosome, for tRNA binding and peptide bond formation. It has been suggested to have peptidyltransferase activity; this is somewhat controversial. Makes several contacts with the 16S rRNA in the 70S ribosome. The polypeptide is Large ribosomal subunit protein uL2 (Lactobacillus helveticus (strain DPC 4571)).